The sequence spans 142 residues: MSDSLVVCDVDPELKETLRKFRFRKETNNAAIIMKVDKDRQMVVLEDEFQNVSPEELKLELPERQPRFVVYSYKYVHDDGRVSYPLCFIFSSPVGCKPEQQMMYAGSKNRLVQIAELTKVFEIRTTDDLNETWLKEKLAFFR.

Position 2 is an N-acetylserine (S2). Positions 4–139 (SLVVCDVDPE…NETWLKEKLA (136 aa)) constitute an ADF-H domain.

Belongs to the actin-binding proteins ADF family. GMF subfamily. Expressed in rat thymus, testis, and spleen. Is present predominantly in proliferative and differentiative organs.

The sequence is that of Glia maturation factor gamma (Gmfg) from Rattus norvegicus (Rat).